Reading from the N-terminus, the 284-residue chain is Bifunctional protein FolD (284 aa).

NADP(+) contacts are provided by residues Gly-165 to Ser-167, Ser-190, and Val-231.

This sequence belongs to the tetrahydrofolate dehydrogenase/cyclohydrolase family. Homodimer.

It carries out the reaction (6R)-5,10-methylene-5,6,7,8-tetrahydrofolate + NADP(+) = (6R)-5,10-methenyltetrahydrofolate + NADPH. The enzyme catalyses (6R)-5,10-methenyltetrahydrofolate + H2O = (6R)-10-formyltetrahydrofolate + H(+). It functions in the pathway one-carbon metabolism; tetrahydrofolate interconversion. In terms of biological role, catalyzes the oxidation of 5,10-methylenetetrahydrofolate to 5,10-methenyltetrahydrofolate and then the hydrolysis of 5,10-methenyltetrahydrofolate to 10-formyltetrahydrofolate. This chain is Bifunctional protein FolD, found in Brevibacillus brevis (strain 47 / JCM 6285 / NBRC 100599).